Consider the following 567-residue polypeptide: Organic cation transporter-like protein (567 aa).

Residues 1 to 21 (MGYDEAIIHLGDFGRYQKIIY) are Cytoplasmic-facing. The helical transmembrane segment at 22-42 (FLICLTSIPVAFHKLAGVFLL) threads the bilayer. At 43 to 127 (AKPDFRCALP…TEWNLVCGRD (85 aa)) the chain is on the extracellular side. Residues Asn-55, Asn-67, Asn-89, and Asn-97 are each glycosylated (N-linked (GlcNAc...) asparagine). A helical transmembrane segment spans residues 128–148 (FMAATSDSLFMLGVLLGSIVF). Topologically, residues 149–158 (GQLSDKYGRK) are cytoplasmic. Residues 159-179 (PILFASLVIQVLFGVLAGVAP) traverse the membrane as a helical segment. Topologically, residues 180 to 189 (EYFTYTFARL) are extracellular. A helical transmembrane segment spans residues 190-210 (MVGATTSGVFLVAYVVAMEMV). Residues 211 to 219 (GPDKRLYAG) lie on the Cytoplasmic side of the membrane. A helical transmembrane segment spans residues 220-240 (IFVMMFFSVGFMLTAVFAYFV). Topologically, residues 241–244 (HDWR) are extracellular. The chain crosses the membrane as a helical span at residues 245–265 (WLQIALTLPGLIFMFYYWIIP). At 266–343 (ESARWLLLKG…LFCYPNLRRK (78 aa)) the chain is on the cytoplasmic side. Positions 304–326 (LDEGENSEEKAKQKLEDQELDEG) are disordered. Over residues 310 to 320 (SEEKAKQKLED) the composition is skewed to basic and acidic residues. A helical transmembrane segment spans residues 344 to 364 (TLLIFLDWLVTSGVYYGLSWN). Residues 365–371 (TSNLGGN) lie on the Extracellular side of the membrane. The chain crosses the membrane as a helical span at residues 372-392 (VLLNFVISGAVEIPAYIFLLL). The Cytoplasmic portion of the chain corresponds to 393–400 (TLNRWGRR). Residues 401 to 421 (SILCGCLVMAGLSLLATVIIP) traverse the membrane as a helical segment. The Extracellular segment spans residues 422 to 427 (QRMHTL). A helical membrane pass occupies residues 428-448 (IVACAMLGKLAITASYGTVYI). Residues 449 to 462 (FSAEQFPTVVRNVA) lie on the Cytoplasmic side of the membrane. Residues 463-483 (LGAASMVARISGMMAPFLNFL) form a helical membrane-spanning segment. The Extracellular portion of the chain corresponds to 484-489 (ATIWKP). The chain crosses the membrane as a helical span at residues 490–510 (LPLLICGSLTLVAGLLSLLLP). The Cytoplasmic segment spans residues 511-567 (ETHNKPMLETIADGERFGKKTKADVYLETGQELRAPEAQPLKGSGETNGSTIANGHK). The disordered stretch occupies residues 546-567 (PEAQPLKGSGETNGSTIANGHK). Polar residues predominate over residues 555–567 (GETNGSTIANGHK).

It belongs to the major facilitator (TC 2.A.1) superfamily. Organic cation transporter (TC 2.A.1.19) family.

The protein localises to the membrane. In terms of biological role, probably transports organic cations. This is Organic cation transporter-like protein (Orct2) from Drosophila melanogaster (Fruit fly).